Consider the following 318-residue polypeptide: NADH-ubiquinone oxidoreductase chain 1 (318 aa).

A run of 8 helical transmembrane segments spans residues 2–22 (FTIN…FLTL), 70–90 (MFII…VPLP), 100–120 (LGVL…LWSG), 146–166 (LAII…STLI), 171–191 (HLWL…STLA), 222–242 (LFFM…TILF), 253–273 (ELYT…FLWI), and 294–314 (LPLT…MSSI).

This sequence belongs to the complex I subunit 1 family.

It is found in the mitochondrion inner membrane. It catalyses the reaction a ubiquinone + NADH + 5 H(+)(in) = a ubiquinol + NAD(+) + 4 H(+)(out). In terms of biological role, core subunit of the mitochondrial membrane respiratory chain NADH dehydrogenase (Complex I) that is believed to belong to the minimal assembly required for catalysis. Complex I functions in the transfer of electrons from NADH to the respiratory chain. The immediate electron acceptor for the enzyme is believed to be ubiquinone. The chain is NADH-ubiquinone oxidoreductase chain 1 (MT-ND1) from Rhinoceros unicornis (Greater Indian rhinoceros).